Consider the following 441-residue polypeptide: MEETQQELTQQLKELETLMAAINLDDSKKKQPIYQNSSESEESETENKNFIYDFSSEEDFEEPVKVKIEEEAETSNKRKFDKNPEFTRFKYQKIPKEYVPAHQTTSTIGVLDIDCVANTEKIIKEWFNHHSILITINEELKNLSSLDTFYYLVYKTRGIAHAYLSNLPSEVLSRIPADRKQVDDWVYNLLLREFVGRLERPESEEAFSQNNYYKLINLEICNMCYLENFLCEFQSRYYGINPIDRENLKVDLLLYAKLPEYVRTQVEAYFNASITSNKLDNTLGGRITALKLWQTEQCNQKLAKRQASVGLCCSKIEDKIGKYGCRKSNPRAKKPKKKFRKIKKYPKKNFWKWNNQRKKKTFRKKRPFRKQQTCPTGKKKCQCWLCHEEGHYANECPKKDNKKAQTLKLIFDLGFEPVESDIETDEELFELTSEDSSEDEY.

The disordered stretch occupies residues Asp26–Pro63. The short motif at Lys77–Lys79 is the Nuclear localization signal element. A CCHC-type zinc finger spans residues Cys381–Lys398.

Belongs to the caulimoviridae capsid protein family. As to quaternary structure, interacts (via nuclear localization signal) with host importin alpha.

The protein resides in the virion. It localises to the host nucleus. Functionally, self assembles to form an icosahedral capsid, about 50 nm in diameter, nm, composed of 420 subunits of the viral capsid protein. The capsid encapsulates the genomic dsDNA. Following virus entry into host cell, provides nuclear import of the viral genome. Virus particles do not enter the nucleus, but dock at the nuclear membrane through the interaction with host importins. This chain is Capsid protein, found in Soybean chlorotic mottle virus.